The following is a 732-amino-acid chain: Zinc/cadmium/lead-transporting P-type ATPase (732 aa).

The Cytoplasmic portion of the chain corresponds to 1 to 124; it reads MSTPDNHGKK…QAADEPQASR (124 aa). Residues 48–112 form the HMA domain; it reads TRYSWKVSGM…AVQKAGYSLR (65 aa). The Zn(2+) site is built by Asp58, Cys59, and Cys62. Residues 125–145 form a helical membrane-spanning segment; sequence LKENLPLITLIVMMAISWGLE. A topological domain (periplasmic) is located at residue Gln146. The helical transmembrane segment at 147–167 threads the bilayer; it reads FNHPFGQLAFIATTLVGLYPI. The Cytoplasmic segment spans residues 168–179; the sequence is ARQALRLIKSGS. The helical transmembrane segment at 180-197 threads the bilayer; that stretch reads YFAIETLMSVAAIGALFI. The Periplasmic portion of the chain corresponds to 198–202; the sequence is GATAE. Residues 203–222 form a helical membrane-spanning segment; sequence AAMVLLLFLIGERLEGWAAS. Residues 223-356 lie on the Cytoplasmic side of the membrane; sequence RARQGVSALM…IDRFSRIYTP (134 aa). The helical transmembrane segment at 357–377 threads the bilayer; the sequence is AIMAVALLVTLVPPLLFAASW. The Periplasmic segment spans residues 378-383; the sequence is QEWIYK. A helical transmembrane segment spans residues 384–404; it reads GLTLLLIGCPCALVISTPAAI. Zn(2+) is bound by residues Cys392 and Cys394. Residues 405–685 are Cytoplasmic-facing; sequence TSGLAAAARR…RATHANIRQN (281 aa). Asp436 acts as the 4-aspartylphosphate intermediate in catalysis. Mg(2+) contacts are provided by Asp436, Thr438, and Asp628. The chain crosses the membrane as a helical span at residues 686 to 702; the sequence is ITIALGLKGIFLVTTLL. Over 703–707 the chain is Periplasmic; that stretch reads GMTGL. A helical transmembrane segment spans residues 708 to 729; sequence WLAVLADTGATVLVTANALRLL. Position 714 (Asp714) interacts with Zn(2+). Topologically, residues 730-732 are cytoplasmic; it reads RRR.

Belongs to the cation transport ATPase (P-type) (TC 3.A.3) family. Type IB subfamily.

The protein resides in the cell inner membrane. The catalysed reaction is Pb(2+)(in) + ATP + H2O = Pb(2+)(out) + ADP + phosphate + H(+). It catalyses the reaction Zn(2+)(in) + ATP + H2O = Zn(2+)(out) + ADP + phosphate + H(+). It carries out the reaction Cd(2+)(in) + ATP + H2O = Cd(2+)(out) + ADP + phosphate + H(+). Its function is as follows. Confers resistance to zinc, cadmium and lead. Couples the hydrolysis of ATP with the export of zinc, cadmium or lead. The chain is Zinc/cadmium/lead-transporting P-type ATPase from Shigella sonnei (strain Ss046).